The following is a 559-amino-acid chain: NAD(P)H-quinone oxidoreductase chain 4-2 (559 aa).

Transmembrane regions (helical) follow at residues 5–25, 35–55, 86–106, 114–134, 136–156, 168–188, 207–227, 242–262, 274–294, 310–330, 331–351, 374–394, 417–437, and 488–508; these read FPWL…IPLI, WYAL…FWTN, ISMP…FAAW, LFYF…VAQD, LLLF…VCIW, FLLY…GLAF, IALE…KLAI, SAPV…YGLI, VYFA…GGFS, VSHM…GISG, AMLQ…LAGV, VFAL…MSGF, VTVF…LSML, and VFIA…PKLA.

Belongs to the complex I subunit 4 family.

It localises to the cellular thylakoid membrane. The catalysed reaction is a plastoquinone + NADH + (n+1) H(+)(in) = a plastoquinol + NAD(+) + n H(+)(out). The enzyme catalyses a plastoquinone + NADPH + (n+1) H(+)(in) = a plastoquinol + NADP(+) + n H(+)(out). Its function is as follows. NDH-1 shuttles electrons from NAD(P)H, via FMN and iron-sulfur (Fe-S) centers, to quinones in the respiratory chain. The immediate electron acceptor for the enzyme in this species is believed to be plastoquinone. Couples the redox reaction to proton translocation (for every two electrons transferred, four hydrogen ions are translocated across the cytoplasmic membrane), and thus conserves the redox energy in a proton gradient. This is NAD(P)H-quinone oxidoreductase chain 4-2 (ndhD2) from Synechocystis sp. (strain ATCC 27184 / PCC 6803 / Kazusa).